Reading from the N-terminus, the 558-residue chain is Membrane protein insertase YidC (558 aa).

A run of 5 helical transmembrane segments spans residues 3 to 23 (IKRT…FDNW), 364 to 384 (FVGN…AVFF), 438 to 458 (LPVV…LASV), 477 to 497 (PYFI…KLNP), and 508 to 528 (MMFM…GLVL).

The protein belongs to the OXA1/ALB3/YidC family. Type 1 subfamily. Interacts with the Sec translocase complex via SecD. Specifically interacts with transmembrane segments of nascent integral membrane proteins during membrane integration.

It localises to the cell inner membrane. Required for the insertion and/or proper folding and/or complex formation of integral membrane proteins into the membrane. Involved in integration of membrane proteins that insert both dependently and independently of the Sec translocase complex, as well as at least some lipoproteins. Aids folding of multispanning membrane proteins. The protein is Membrane protein insertase YidC of Burkholderia mallei (strain NCTC 10247).